We begin with the raw amino-acid sequence, 644 residues long: MQDWTIEDSAELYQIHGWGEPYFKINDKGHVAVMPRGEGNGEIDLFHLVQDIQKRGLNMPMLIRFSDILADRIARLNACFVEAIREYDYPGIYKGVYPVKVNQQRHVVEEVVEFGRPFQYGLEAGSKPELLIALATLKTPGALIICNGYKDSEYIETALLAQRLGHTPFVVIERFHELTLLIEAAQKLGIRPLIGVRAKLTARGIGRWGDSTGDRAKFGLSAGEIMEVVAQLKAADLLSSLQLLHFHIGSQISAINVIKTALREASCVYVELAQMGAPMQYCDVGGGLAIDYDGSKTNFRASKNYNMQEYAYDVVAAFQDACRTKNVPVPTLVSESGRAITSHQSVLVFDVMGVSHLQFGEPEPPARNEHSIIRNLYETYTQITPDNVQEAFNDASQFKEEALSLFALGYLGLGERARAERLYWGCCEKILNLVRELDYIPDELADLEKNMASTYYCNFSVFQSAPDSWAIDQLFPIMPIHRLDEEPKARGTLADLTCDSDGKIDQFIDLRDVKGVLELHPVRPEEPYYLGMFLNGAYQEILGDMHNLFGDTNTVHIHLASDEPGEQSYRLEHVVKGDTMTEVLKYVQYDHEAMLESIRRETEQALRERRITLSESRLLLQHYERSLSGYTYLTNELQVELAAR.

Lys100 is subject to N6-(pyridoxal phosphate)lysine. Residue 282 to 292 coordinates substrate; the sequence is CDVGGGLAIDY.

Belongs to the Orn/Lys/Arg decarboxylase class-II family. SpeA subfamily. It depends on Mg(2+) as a cofactor. Requires pyridoxal 5'-phosphate as cofactor.

It catalyses the reaction L-arginine + H(+) = agmatine + CO2. Its function is as follows. Catalyzes the biosynthesis of agmatine from arginine. In Gloeobacter violaceus (strain ATCC 29082 / PCC 7421), this protein is Biosynthetic arginine decarboxylase.